Here is a 378-residue protein sequence, read N- to C-terminus: Glutamate 5-kinase (378 aa).

Lys-20 serves as a coordination point for ATP. The substrate site is built by Ser-60, Asp-147, and Asn-159. ATP is bound by residues 179–180 (TD) and 221–227 (TGGMLTK). The region spanning 286–364 (RGRVVLDAGA…SQIARILGSM (79 aa)) is the PUA domain.

It belongs to the glutamate 5-kinase family.

The protein resides in the cytoplasm. It catalyses the reaction L-glutamate + ATP = L-glutamyl 5-phosphate + ADP. Its pathway is amino-acid biosynthesis; L-proline biosynthesis; L-glutamate 5-semialdehyde from L-glutamate: step 1/2. In terms of biological role, catalyzes the transfer of a phosphate group to glutamate to form L-glutamate 5-phosphate. The protein is Glutamate 5-kinase of Bordetella petrii (strain ATCC BAA-461 / DSM 12804 / CCUG 43448).